Here is a 218-residue protein sequence, read N- to C-terminus: MGQRINPLGFRLGVTQNHRSHWFAQKKYYSEDLQEDEEIRNCIENYVRRHMKNYSNYGGIARVEIRRKIDLIQVEIHIGFPNLLIEDRGRGIEQLRTDVRNMLNSANRKLNISIAKVAKPYGVPNILAEYIALQLEDRVSFRKTVKKAIELAEQADIRGIQIQIAGRLDGNEIARVEWARGGRVPLQTIRARIDHCYYPAKTIYGVLGIKIWIFGDEE.

The KH type-2 domain maps to 47–118; sequence VRRHMKNYSN…KLNISIAKVA (72 aa).

It belongs to the universal ribosomal protein uS3 family. As to quaternary structure, part of the 30S ribosomal subunit.

Its subcellular location is the plastid. It is found in the chloroplast. The sequence is that of Small ribosomal subunit protein uS3c (rps3) from Ginkgo biloba (Ginkgo).